The sequence spans 274 residues: MAIKTYKPTSAGRRHQTCSAFDEITTSTPEKSLIVTIKKTGGRNSFGRITARHIGGGHKKKYRIIDFRRNKVEVPAKVASIEYDPNRSARIALLHYADGAKRYILAPLDLKVGDSIVASSNADIKPGNALPLRAIPLGTIIHNIELKIGKGGQLARSAGTFAQLMAKEGKYAQVKLPSGEVRMVLLDCMATIGQVGNIDHENVSIGKAGRSRWLGRRPKVRGVAMNPVDHPHGGGEGRTSGGRHPVTPWGIPTKGYKTRKNKTSTRFIVKKRSK.

The interval 223 to 257 (VAMNPVDHPHGGGEGRTSGGRHPVTPWGIPTKGYK) is disordered.

Belongs to the universal ribosomal protein uL2 family. In terms of assembly, part of the 50S ribosomal subunit. Forms a bridge to the 30S subunit in the 70S ribosome.

One of the primary rRNA binding proteins. Required for association of the 30S and 50S subunits to form the 70S ribosome, for tRNA binding and peptide bond formation. It has been suggested to have peptidyltransferase activity; this is somewhat controversial. Makes several contacts with the 16S rRNA in the 70S ribosome. This Geobacter sulfurreducens (strain ATCC 51573 / DSM 12127 / PCA) protein is Large ribosomal subunit protein uL2.